A 1802-amino-acid chain; its full sequence is MATPVRDETRNVIDDNISARIQSKVKTNDTVRQTPSSLRKVSIKDEQVKQYQRNLNRFKTILNGLKAEEEKLSETDDIQMLAEKLLKLGETIDKVENRIVDLVEKIQLLETNENNNILHEHIDATGTYYLFDTLTSTNKRFYPKDCVFDYRTNNVENIPILLNNFKKFIKKYQFDDVFENDIIEIDPRENEILCKIIKEGLGESLDIMNTNTTDIFRIIDGLKNKYRSLHGRDVRIRAWEKVLVDTTCRNSALLMNKLQKLVLMEKWIFSKCCQDCPNLKDYLQEAIMGTLHESLRNSVKQRLYNIPHNVGINHEEFLINTVIETVIDLSPIADDQIENSCMYCKSVFHCSINCKKKPNRELGLTRPISQKPIIYKVHRDNNNLSPVQNEQKSWNKTQKKSNKVYNSKKLVIIDTGSGVNITNDKTLLHNYEDSNRSTRFFGIGKNSSVSVKGYGYIKIKNGHNNTDNKCLLTYYVPEEESTIISCYDLAKKTKMVLSRKYTRLGNKIIKIKTKIVNGVIHVKMNELIERPSDDSKINAIKPTSSPGFKLNKRSITLEDAHKRMGHTGIQQIENSIKHNHYEESLDLIKEPNEFWCQTCKISKATKRNHYTGSMNNHSTDHEPGSSWCMDIFGPVSSSNADTKRYMLIMVDNNTRYCMTSTHFNKNAETILAQIRKNIQYVETQFDRKVREINSDRGTEFTNDQIEEYFISKGIHHILTSTQDHAANGRAERYIRTIVTDATTLLRQSNLRVKFWEYAVTSATNIRNCLEHKSTGKLPLKAISRQPVTVRLMSFLPFGEKGIIWNHNHKKLKPSGLPSIILCKDPNSYGYKFFIPSKNKIVTSDNYTIPNYTMDGRVRNTQNIYKSHQFSSHNDNEEDQIETVTNLCEALENYEDDNKPITRLEDLFTEEELSQIDSNAKYPSPSNNLEGDLDYVFSDVEESGDYDVESELSTTNTSISTDKNKILSNKDFNSELASTEISISEIDKKGLINTSHIDEDKYDEKVHRIPSIIQEKLVGSKNTIKINDENRISDRIRSKNIGSILNTGLSRCVDITDESITNKDESMHNAKPELIQEQFNKTNHETSFPKEGSIGTNVKFRNTDNEISLKTGDTSLPIKTLESINNHHSNDYSTNKVEKFEKENHHPPPIEDIVDMSDQTDMESNCQDGNNLKELKVTDKNVPTDNGTNVSPRLEQNIEASGSPVQTVNKSAFLNKEFSSLNMKRKRKRHDKNNSLTSYELERDKKRSKRNRVKLIPDNMETVSAQKIRAIYYNEAISKNPDLKEKHEYKQAYHKELQNLKDMKVFDVDVKYSRSEIPDNLIVPTNTIFTKKRNGIYKARIVCRGDTQSPDTYSVITTESLNHNHIKIFLMIANNRNMFMKTLDINHAFLYAKLEEEIYIPHPHDRRCVVKLNKALYGLKQSPKEWNDHLRQYLNGIGLKDNSYTPGLYQTEDKNLMIAVYVDDCVIAASNEQRLDEFINKLKSNFELKITGTLIDDVLDTDILGMDLVYNKRLGTIDLTLKSFINRMDKKYNEELKKIRKSSIPHMSTYKIDPKKDVLQMSEEEFRQGVLKLQQLLGELNYVRHKCRYDINFAVKKVARLVNYPHERVFYMIYKIIQYLVRYKDIGIHYDRDCNKDKKVIAITDASVGSEYDAQSRIGVILWYGMNIFNVYSNKSTNRCVSSTEAELHAIYEGYADSETLKVTLKELGEGDNNDIVMITDSKPAIQGLNRSYQQPKEKFTWIKTEIIKEKIKEKSIKLLKITGKGNIADLLTKPVSASDFKRFIQVLKNKITSQDILASTDY.

Residues 39 to 115 (RKVSIKDEQV…IQLLETNENN (77 aa)) adopt a coiled-coil conformation. The tract at residues 381–501 (NNNLSPVQNE…KTKMVLSRKY (121 aa)) is ty4 protease. The For protease activity; shared with dimeric partner role is filled by Asp414. The interval 539-599 (AIKPTSSPGF…EPNEFWCQTC (61 aa)) is integrase-type zinc finger-like. The region spanning 619 to 786 (TDHEPGSSWC…LPLKAISRQP (168 aa)) is the Integrase catalytic domain. The Mg(2+) site is built by Asp630 and Asp695. The segment at 1223–1248 (KRKRKRHDKNNSLTSYELERDKKRSK) is disordered. Residues 1375–1510 (RNMFMKTLDI…DILGMDLVYN (136 aa)) form the Reverse transcriptase Ty1/copia-type domain. 6 residues coordinate Mg(2+): Asp1383, Asp1462, Asp1463, Asp1644, Glu1686, and Asp1720. An RNase H Ty1/copia-type domain is found at 1644–1790 (DASVGSEYDA…KRFIQVLKNK (147 aa)).

In terms of assembly, the protease is a homodimer, whose active site consists of two apposed aspartic acid residues. In terms of processing, proteolytically processed into capsid protein (CA), Ty4 protease (PR), integrase (IN) and reverse transcriptase/ribonuclease H (RT) proteins. Initially, virus-like particles (VLPs) are composed of the structural unprocessed proteins Gag and Gag-Pol, and also contain the host initiator methionine tRNA (tRNA(i)-Met) which serves as a primer for minus-strand DNA synthesis, and a dimer of genomic Ty RNA. Processing of the polyproteins occurs within the particle and proceeds by an ordered pathway, called maturation. First, the protease (PR) is released by autocatalytic cleavage of the Gag-Pol polyprotein, and this cleavage is a prerequisite for subsequent processing at the remaining sites to release the mature structural and catalytic proteins. Maturation takes place prior to the RT reaction and is required to produce transposition-competent VLPs.

It is found in the cytoplasm. The protein localises to the nucleus. The enzyme catalyses DNA(n) + a 2'-deoxyribonucleoside 5'-triphosphate = DNA(n+1) + diphosphate. The catalysed reaction is Endonucleolytic cleavage to 5'-phosphomonoester.. In terms of biological role, capsid protein (CA) is the structural component of the virus-like particle (VLP), forming the shell that encapsulates the retrotransposons dimeric RNA genome. The aspartyl protease (PR) mediates the proteolytic cleavages of the Gag and Gag-Pol polyproteins after assembly of the VLP. Functionally, reverse transcriptase/ribonuclease H (RT) is a multifunctional enzyme that catalyzes the conversion of the retro-elements RNA genome into dsDNA within the VLP. The enzyme displays a DNA polymerase activity that can copy either DNA or RNA templates, and a ribonuclease H (RNase H) activity that cleaves the RNA strand of RNA-DNA heteroduplexes during plus-strand synthesis and hydrolyzes RNA primers. The conversion leads to a linear dsDNA copy of the retrotransposon that includes long terminal repeats (LTRs) at both ends. Its function is as follows. Integrase (IN) targets the VLP to the nucleus, where a subparticle preintegration complex (PIC) containing at least integrase and the newly synthesized dsDNA copy of the retrotransposon must transit the nuclear membrane. Once in the nucleus, integrase performs the integration of the dsDNA into the host genome. This Saccharomyces cerevisiae (strain ATCC 204508 / S288c) (Baker's yeast) protein is Transposon Ty4-H Gag-Pol polyprotein (TY4B-H).